The sequence spans 391 residues: Heme A synthase (391 aa).

8 helical membrane passes run 37-57, 121-141, 152-172, 186-206, 229-249, 298-318, 332-352, and 354-374; these read IRLW…VGGL, RQLG…FLAA, LLAL…MVAS, LATH…QALL, TTVL…VAGI, FLHR…WIFG, LLAM…LSAA, and WQVA…ILHA. H300 provides a ligand contact to heme. H360 serves as a coordination point for heme.

It belongs to the COX15/CtaA family. Type 2 subfamily. As to quaternary structure, interacts with CtaB. Heme b is required as a cofactor.

It localises to the cell membrane. It catalyses the reaction Fe(II)-heme o + 2 A + H2O = Fe(II)-heme a + 2 AH2. It functions in the pathway porphyrin-containing compound metabolism; heme A biosynthesis; heme A from heme O: step 1/1. Its function is as follows. Catalyzes the conversion of heme O to heme A by two successive hydroxylations of the methyl group at C8. The first hydroxylation forms heme I, the second hydroxylation results in an unstable dihydroxymethyl group, which spontaneously dehydrates, resulting in the formyl group of heme A. The sequence is that of Heme A synthase from Cereibacter sphaeroides (strain ATCC 17029 / ATH 2.4.9) (Rhodobacter sphaeroides).